The following is an 847-amino-acid chain: GPMGPSGPRGIPGPPGSPGPQGFQGPPGEPGEPGSSGPMGPRGPPGPPGKNGDDGEAGKPGRPGERGPSGPQGPRPGMKGHRGFSGIDGAKGDAGPAGPKGEPGSPGENGAPGQMGPRGIPGERGRPGASGPAGARGNDGATGAAGPPGPTGPAGPPGFPGAVGAKGEAGPQGARGSEGPQGVRGEPGPPGPAGAAGPAGNPGADGQPGAKGAGPSGPQGPSGAPGPKGNSGEPGAPGNKGEPGPTGIQGPPGPAGEEGKRGAGEPGPTGIPGPPGERGFPGADGVAGPKGSPGPAGPKGITGSPGSPGPDGKTGPPGPAGQDGRGQAGVMGFPGPKGAAGEPGKAGERGVPGPPGAAGPAGKDGEAGAQGPPGPAGPAGERGEQGPAGSPGFQGPAGPPGEAGKDIGAPGPSGARGERGFPGERGVQGPPGPAGPRGSNGAPGNDGAKIQGMPGERGAAGIPGPKGDRGDSGPKGAGITGPIGPPGPAGATGDKGETGPSGPAGPTGARGPPGPAGFAGPPGADGQPGAKGEPGDAGAKGDAGPPGPAGPTGAPGPIGNIGAPGPKGARGSAGPPGATGFPGAAGRVGPPGPSGNAGAPGPPGPAGKEGGKGPRGETGPAGRGEKGSPGADGPAGAPGTPGPQGISGQRGVVGIPGQRGFPGIPGPSGEPGKQGPSGSSGERGPPGPMGPPGIAGPPGESGREGSPGAEGSPGRDGSPGPKGDRGETGPSGPPGAPGAPGAPGPVGPAGKGETGPAGPAGPAGPAGARGPSGPQGPRGDKGETGEQGDRGFSGIQGPPGAPGSPGEQGPSGASGPAGPRGPPGSAGSPGKDGINGIPGPIGPPGPR.

Residues 1–847 (GPMGPSGPRG…PGPIGPPGPR (847 aa)) form a disordered region. Residues 20 to 39 (PQGFQGPPGEPGEPGSSGPM) show a composition bias toward low complexity. The segment covering 51-65 (NGDDGEAGKPGRPGE) has biased composition (basic and acidic residues). S85 is subject to Phosphoserine. Low complexity-rich tracts occupy residues 93–109 (DAGP…PGEN) and 127–145 (PGAS…TGAA). Pro residues predominate over residues 147–159 (PPGPTGPAGPPGF). Low complexity-rich tracts occupy residues 193-208 (AGAA…DGQP), 219-228 (QGPSGAPGPK), 298-314 (PKGI…DGKT), 334-343 (PGPKGAAGEP), 500-543 (PSGP…KGDA), 551-599 (PTGA…NAGA), and 628-638 (SPGADGPAGAP). At S501 the chain carries Phosphoserine. The segment covering 685-695 (PPGPMGPPGIA) has biased composition (pro residues). Over residues 697-712 (PPGESGREGSPGAEGS) the composition is skewed to low complexity. Positions 731-746 (SGPPGAPGAPGAPGPV) are enriched in pro residues. Positions 763 to 777 (AGPAGARGPSGPQGP) are enriched in low complexity. The segment covering 778–789 (RGDKGETGEQGD) has biased composition (basic and acidic residues). Residues 793–838 (SGIQGPPGAPGSPGEQGPSGASGPAGPRGPPGSAGSPGKDGINGIP) show a composition bias toward low complexity.

This sequence belongs to the fibrillar collagen family. Trimers of one alpha 2(I) and two alpha 1(I) chains. Prolines at the third position of the tripeptide repeating unit (G-X-Y) are hydroxylated in some or all of the chains. In terms of tissue distribution, forms the fibrils of tendon, ligaments and bones. In bones, the fibrils are mineralized with calcium hydroxyapatite.

It localises to the secreted. The protein resides in the extracellular space. The protein localises to the extracellular matrix. In terms of biological role, type I collagen is a member of group I collagen (fibrillar forming collagen). The chain is Collagen alpha-1(I) chain from Cyclopes didactylus (Silky anteater).